Here is a 235-residue protein sequence, read N- to C-terminus: Lipoprotein-releasing system ATP-binding protein LolD (235 aa).

Residues 7 to 234 form the ABC transporter domain; it reads LQCTNLSKRY…QQELTLMGAR (228 aa). 43-50 is an ATP binding site; the sequence is GSSGSGKS.

This sequence belongs to the ABC transporter superfamily. Lipoprotein translocase (TC 3.A.1.125) family. As to quaternary structure, the complex is composed of two ATP-binding proteins (LolD) and two transmembrane proteins (LolC and LolE).

It is found in the cell inner membrane. In terms of biological role, part of the ABC transporter complex LolCDE involved in the translocation of mature outer membrane-directed lipoproteins, from the inner membrane to the periplasmic chaperone, LolA. Responsible for the formation of the LolA-lipoprotein complex in an ATP-dependent manner. The chain is Lipoprotein-releasing system ATP-binding protein LolD from Pectobacterium atrosepticum (strain SCRI 1043 / ATCC BAA-672) (Erwinia carotovora subsp. atroseptica).